The chain runs to 645 residues: Transcription factor AN6788 (645 aa).

Positions 1 to 21 are disordered; the sequence is MPQKAQPQPRESPFKPARQQP. A DNA-binding region (zn(2)-C6 fungal-type) is located at residues 25–52; the sequence is CEECRKRKARCDRAKPQCGSCMMTGRVC. The span at 113–131 shows a compositional bias: basic and acidic residues; sequence PDFEPNSHPRHSQSHDRRQ. A disordered region spans residues 113-170; the sequence is PDFEPNSHPRHSQSHDRRQQSGPDSSPDTQHELPFLQSPPAARDADSAERALLPSPVS.

Its subcellular location is the nucleus. Its function is as follows. Transcription factors AN6788 and AN6790 act in tandem to regulate the expression of the non-reducing polyketide synthase pkfA from the aspernidine A biosynthesis cluster. They do not control the expression of the other genes involved in aspernidine A biosynthesis, nor do they regulate the expression of the highly reducing polyketide synthase AN6791 and the esterase AN6793 with which they are predicted to form a secondary metabolite biosynthesis cluster. The protein is Transcription factor AN6788 of Emericella nidulans (strain FGSC A4 / ATCC 38163 / CBS 112.46 / NRRL 194 / M139) (Aspergillus nidulans).